A 440-amino-acid chain; its full sequence is MHLDILKNADPEVYAAIQSELERQTDTLELIASENFTSRAVMEACGSVMTNKYAEGYPGKRFYGGCEFVDVAEDLARDRAKKLFSCEYANVQPHSGSSANMAVIFTFCKPGDTILGFDLSHGGHLTHGSPVNFSGQFYNAHFYGVEKETGRIDMNRVEEKAKEVKPKLIICGASAYSRDWEYAEFRRIADSVDAILMADIAHPAGLIATGLLNDPMPHCHVVTTTTHKTLRGPRGGMILMGKDFENPMGIKAKTKTGERIKMVSELLDAMVMPGIQGGPLMHVIAGKAVAFGEALNPEYKQYMEQVRKNAAAMAEQFISLGYDIISGGTDNHLMLIDLRNKDITGKKTENLLHEAGITVNKNMVPFDDKSPFVTSGFRVGAAAMTTREMKEAEAKTIVKFIDKVISNAGSENISAICQEVKEEVNALCQQFPLYDFVPAS.

Residues Leu-119 and 123–125 (GHL) each bind (6S)-5,6,7,8-tetrahydrofolate. At Lys-228 the chain carries N6-(pyridoxal phosphate)lysine. 370–372 (SPF) provides a ligand contact to (6S)-5,6,7,8-tetrahydrofolate.

The protein belongs to the SHMT family. As to quaternary structure, homodimer. Pyridoxal 5'-phosphate serves as cofactor.

Its subcellular location is the cytoplasm. It carries out the reaction (6R)-5,10-methylene-5,6,7,8-tetrahydrofolate + glycine + H2O = (6S)-5,6,7,8-tetrahydrofolate + L-serine. The protein operates within one-carbon metabolism; tetrahydrofolate interconversion. Its pathway is amino-acid biosynthesis; glycine biosynthesis; glycine from L-serine: step 1/1. In terms of biological role, catalyzes the reversible interconversion of serine and glycine with tetrahydrofolate (THF) serving as the one-carbon carrier. This reaction serves as the major source of one-carbon groups required for the biosynthesis of purines, thymidylate, methionine, and other important biomolecules. Also exhibits THF-independent aldolase activity toward beta-hydroxyamino acids, producing glycine and aldehydes, via a retro-aldol mechanism. The sequence is that of Serine hydroxymethyltransferase from Chloroherpeton thalassium (strain ATCC 35110 / GB-78).